The primary structure comprises 692 residues: Elongation factor G (692 aa).

The tr-type G domain maps to 8 to 282 (EKVRNIGIAA…AVVDYLPAPS (275 aa)). Residues 17–24 (AHIDAGKT), 81–85 (DTPGH), and 135–138 (NKMD) contribute to the GTP site.

It belongs to the TRAFAC class translation factor GTPase superfamily. Classic translation factor GTPase family. EF-G/EF-2 subfamily.

It is found in the cytoplasm. Its function is as follows. Catalyzes the GTP-dependent ribosomal translocation step during translation elongation. During this step, the ribosome changes from the pre-translocational (PRE) to the post-translocational (POST) state as the newly formed A-site-bound peptidyl-tRNA and P-site-bound deacylated tRNA move to the P and E sites, respectively. Catalyzes the coordinated movement of the two tRNA molecules, the mRNA and conformational changes in the ribosome. The polypeptide is Elongation factor G (Nostoc punctiforme (strain ATCC 29133 / PCC 73102)).